We begin with the raw amino-acid sequence, 578 residues long: MICOS complex subunit MIC60 (578 aa).

The transit peptide at 1–28 (MIRTSVRRVVVNSNKFDVRSISNSSIRF) directs the protein to the mitochondrion. Residues 29 to 68 (NVPNNQRTPPPAVRPPTSPIIVTEGGPKGGSQKQKKKFSF) lie on the Mitochondrial matrix side of the membrane. Residues 69–91 (AGFLFKTAFWASVVYGGTLFVAT) traverse the membrane as a helical segment. The Mitochondrial intermembrane segment spans residues 92–578 (KNDKVMDFIM…KIIDAESKIL (487 aa)). Positions 169-191 (LGTSTGAKPRQAIPEGNSAPTPA) are disordered. Residues 248-317 (ESLMREITEN…HEKAQMEKKL (70 aa)) are a coiled coil.

Belongs to the MICOS complex subunit Mic60 family. As to quaternary structure, component of the mitochondrial contact site and cristae organizing system (MICOS) complex.

The protein resides in the mitochondrion inner membrane. In terms of biological role, component of the MICOS complex, a large protein complex of the mitochondrial inner membrane that plays crucial roles in the maintenance of crista junctions, inner membrane architecture, and formation of contact sites to the outer membrane. Plays a role in keeping cristae membranes connected to the inner boundary membrane. Also promotes protein import via the mitochondrial intermembrane space assembly (MIA) pathway. The sequence is that of MICOS complex subunit MIC60 (MIC60) from Debaryomyces hansenii (strain ATCC 36239 / CBS 767 / BCRC 21394 / JCM 1990 / NBRC 0083 / IGC 2968) (Yeast).